A 227-amino-acid polypeptide reads, in one-letter code: Ribonuclease HII (227 aa).

Residues 16 to 205 (SLLAGVDEVG…VKMALDAVGV (190 aa)) form the RNase H type-2 domain. 3 residues coordinate a divalent metal cation: Asp22, Glu23, and Asp114.

This sequence belongs to the RNase HII family. Mn(2+) serves as cofactor. It depends on Mg(2+) as a cofactor.

It localises to the cytoplasm. The catalysed reaction is Endonucleolytic cleavage to 5'-phosphomonoester.. Functionally, endonuclease that specifically degrades the RNA of RNA-DNA hybrids. This chain is Ribonuclease HII, found in Marinobacter nauticus (strain ATCC 700491 / DSM 11845 / VT8) (Marinobacter aquaeolei).